The sequence spans 592 residues: MASVVVKTIWQSKEIHEAGDTPTGVESCSQLVPEAPRRVTSRAKGIPKKKKAVSFHGVEPQMSHQPMHWCLNLKRSSACTNVSLLNLAAMEPTDSTGTDSTVEDLSGQLTLAGPPASPTLPWDPDDADITEILSGVNSGLVRAKDSITSLKEKTNRVNQHVQSLQSECSVLSENLERRRQEAEELEGYCIQLKENCWKVTRSVEDAEIKTNVLKQNSALLEEKLRYLQQQLQDETPRRQEAELQEPEEKQEPEEKQEPEEKQKPEAGLSWNSLGPAATSQGCPGPPGSPDKPSRPHGLVPAGWGMGPRAGEGPYVSEQELQKLFTGIEELRREVSSLTARWHQEEGAVQEALRLLGGLGGRVDGFLGQWERAQREQAQTARDLQELRGRADELCTMVERSAVSVASLRSELEGLGPLKPILEEFGRQFQNSRRGPDLSMNLDRSHQGNCARCASQGSQLSTESLQQLLDRALTSLVDEVKQRGLTPACPSCQRLHKKILELERQALAKHVRAEALSSTLRLAQDEALRAKNLLLTDKMKPEEKMATLDHLHLKMCSLHDHLSNLPLEGSTGTMGGGSSAGTPPKQGGSAPEQ.

Residue Ser-217 is modified to Phosphoserine. The segment at 232 to 308 is disordered; it reads QDETPRRQEA…VPAGWGMGPR (77 aa). Over residues 234 to 264 the composition is skewed to basic and acidic residues; the sequence is ETPRRQEAELQEPEEKQEPEEKQEPEEKQKP. Residues 269–281 are compositionally biased toward polar residues; that stretch reads SWNSLGPAATSQG. Ser-288 carries the phosphoserine; by TSSK1 and TSSK2 modification. Position 316 is a phosphoserine (Ser-316). The segment at 566–592 is disordered; sequence LEGSTGTMGGGSSAGTPPKQGGSAPEQ.

Post-translationally, phosphorylated on serine residue(s) by STK22A/TSSK1 and STK22B/TSSK2. In terms of tissue distribution, highly expressed in testis. Expressed at low levels in prostate, female breast, placenta, ovary and thymus.

It is found in the cytoplasm. The protein localises to the cytoskeleton. It localises to the microtubule organizing center. Its subcellular location is the centrosome. The protein resides in the centriole. May play a role in testicular physiology, most probably in the process of spermatogenesis or spermatid development. In Homo sapiens (Human), this protein is Testis-specific serine kinase substrate (TSKS).